A 586-amino-acid chain; its full sequence is Asparagine synthetase, nodule [glutamine-hydrolyzing] (586 aa).

The active-site For GATase activity is Cys-2. A Glutamine amidotransferase type-2 domain is found at 2–185; that stretch reads CGILAVLGCS…PGHLYSSKER (184 aa). Residues 50 to 54, 75 to 77, and Asp-98 contribute to the L-glutamine site; these read RLAIV and NGE. The Asparagine synthetase domain occupies 193–517; sequence PPWFNEAIIP…PQNSARLTVP (325 aa). Residues Leu-232, Val-268, and 342 to 343 contribute to the ATP site; that span reads SG.

In terms of tissue distribution, root nodules.

The enzyme catalyses L-aspartate + L-glutamine + ATP + H2O = L-asparagine + L-glutamate + AMP + diphosphate + H(+). It participates in amino-acid biosynthesis; L-asparagine biosynthesis; L-asparagine from L-aspartate (L-Gln route): step 1/1. This chain is Asparagine synthetase, nodule [glutamine-hydrolyzing] (AS1), found in Pisum sativum (Garden pea).